A 254-amino-acid polypeptide reads, in one-letter code: uncharacterized protein (254 aa).

This is an uncharacterized protein from Caenorhabditis elegans.